The primary structure comprises 148 residues: uncharacterized protein (148 aa).

2 consecutive transmembrane segments (helical) span residues 16-36 and 41-61; these read IVGAVIFSMSIIVILYISIIL and LSFSIILAVDILIIALFAYIF.

To M.jannaschii MJ0696.

It localises to the cell membrane. This is an uncharacterized protein from Methanocaldococcus jannaschii (strain ATCC 43067 / DSM 2661 / JAL-1 / JCM 10045 / NBRC 100440) (Methanococcus jannaschii).